A 312-amino-acid chain; its full sequence is Acetyl-coenzyme A carboxylase carboxyl transferase subunit alpha (312 aa).

The region spanning 36–286 (NLEKEISKTY…ADYVKKSLNE (251 aa)) is the CoA carboxyltransferase C-terminal domain.

It belongs to the AccA family. Acetyl-CoA carboxylase is a heterohexamer composed of biotin carboxyl carrier protein (AccB), biotin carboxylase (AccC) and two subunits each of ACCase subunit alpha (AccA) and ACCase subunit beta (AccD).

It localises to the cytoplasm. It carries out the reaction N(6)-carboxybiotinyl-L-lysyl-[protein] + acetyl-CoA = N(6)-biotinyl-L-lysyl-[protein] + malonyl-CoA. The protein operates within lipid metabolism; malonyl-CoA biosynthesis; malonyl-CoA from acetyl-CoA: step 1/1. Its function is as follows. Component of the acetyl coenzyme A carboxylase (ACC) complex. First, biotin carboxylase catalyzes the carboxylation of biotin on its carrier protein (BCCP) and then the CO(2) group is transferred by the carboxyltransferase to acetyl-CoA to form malonyl-CoA. This is Acetyl-coenzyme A carboxylase carboxyl transferase subunit alpha from Campylobacter jejuni subsp. jejuni serotype O:23/36 (strain 81-176).